The primary structure comprises 204 residues: MILGIDEAGRGCLAGSLFVAGVACDDQTALEFLKMGLKDSKKLSPKKRFFLEDKIKTHGEVGFFVVKKSANEIDSLGLGACLKLAVQEILENGCSLANEIKIDGNTAFGLNKRYPNIQTIIKGDEKIAQIAMASVLAKAFKDREMRQLHALFKEYGWDKNCGYGTKQHIEAISKLGATPFHRHSFTLKNRILNPKLLEVEQRLI.

Residues methionine 1–leucine 197 enclose the RNase H type-2 domain. A divalent metal cation contacts are provided by aspartate 6, glutamate 7, and aspartate 103.

Belongs to the RNase HII family. It depends on Mn(2+) as a cofactor. Requires Mg(2+) as cofactor.

The protein resides in the cytoplasm. The catalysed reaction is Endonucleolytic cleavage to 5'-phosphomonoester.. Endonuclease that specifically degrades the RNA of RNA-DNA hybrids. The polypeptide is Ribonuclease HII (Helicobacter pylori (strain G27)).